The following is a 148-amino-acid chain: UPF0179 protein Mpal_0949 (148 aa).

Belongs to the UPF0179 family.

This chain is UPF0179 protein Mpal_0949, found in Methanosphaerula palustris (strain ATCC BAA-1556 / DSM 19958 / E1-9c).